A 125-amino-acid polypeptide reads, in one-letter code: Large ribosomal subunit protein uL22 (125 aa).

It belongs to the universal ribosomal protein uL22 family. Part of the 50S ribosomal subunit.

In terms of biological role, this protein binds specifically to 23S rRNA; its binding is stimulated by other ribosomal proteins, e.g. L4, L17, and L20. It is important during the early stages of 50S assembly. It makes multiple contacts with different domains of the 23S rRNA in the assembled 50S subunit and ribosome. Its function is as follows. The globular domain of the protein is located near the polypeptide exit tunnel on the outside of the subunit, while an extended beta-hairpin is found that lines the wall of the exit tunnel in the center of the 70S ribosome. The polypeptide is Large ribosomal subunit protein uL22 (Erythrobacter litoralis (strain HTCC2594)).